The following is a 197-amino-acid chain: dTTP/UTP pyrophosphatase (197 aa).

Catalysis depends on aspartate 70, which acts as the Proton acceptor.

This sequence belongs to the Maf family. YhdE subfamily. It depends on a divalent metal cation as a cofactor.

The protein resides in the cytoplasm. It carries out the reaction dTTP + H2O = dTMP + diphosphate + H(+). It catalyses the reaction UTP + H2O = UMP + diphosphate + H(+). Nucleoside triphosphate pyrophosphatase that hydrolyzes dTTP and UTP. May have a dual role in cell division arrest and in preventing the incorporation of modified nucleotides into cellular nucleic acids. This chain is dTTP/UTP pyrophosphatase (yceF2), found in Shigella sonnei (strain Ss046).